The sequence spans 247 residues: ATP synthase subunit a, chloroplastic (247 aa).

A run of 5 helical transmembrane segments spans residues 38–58, 95–115, 134–154, 199–219, and 220–240; these read QVLITSWVVITILLGSVIIAV, VPFIGTMFLFIFVSNWSGALL, INTTVALALLTSAAYFYAGLS, LVVVVLVSLVPLVVPIPVMFL, and GLFTSGIQALIFATLAAAYIG.

This sequence belongs to the ATPase A chain family. F-type ATPases have 2 components, CF(1) - the catalytic core - and CF(0) - the membrane proton channel. CF(1) has five subunits: alpha(3), beta(3), gamma(1), delta(1), epsilon(1). CF(0) has four main subunits: a, b, b' and c.

It localises to the plastid. The protein localises to the chloroplast thylakoid membrane. In terms of biological role, key component of the proton channel; it plays a direct role in the translocation of protons across the membrane. This Oryza nivara (Indian wild rice) protein is ATP synthase subunit a, chloroplastic.